We begin with the raw amino-acid sequence, 562 residues long: Ribonuclease Y (562 aa).

The helical transmembrane segment at methionine 1–glycine 21 threads the bilayer. Residues alanine 108–glutamate 129 are disordered. In terms of domain architecture, KH spans serine 252 to leucine 312. In terms of domain architecture, HD spans valine 378 to alanine 471.

Belongs to the RNase Y family.

Its subcellular location is the cell membrane. Endoribonuclease that initiates mRNA decay. The polypeptide is Ribonuclease Y (Deinococcus geothermalis (strain DSM 11300 / CIP 105573 / AG-3a)).